The sequence spans 40 residues: MFDALANINWEVIFQLTSVALIIIAGPAVIFVLAFRNGNL.

The helical transmembrane segment at 12-32 (VIFQLTSVALIIIAGPAVIFV) threads the bilayer.

The protein belongs to the Psb30/Ycf12 family. As to quaternary structure, PSII is composed of 1 copy each of membrane proteins PsbA, PsbB, PsbC, PsbD, PsbE, PsbF, PsbH, PsbI, PsbJ, PsbK, PsbL, PsbM, PsbT, PsbX, PsbY, PsbZ, Psb30/Ycf12, peripheral proteins PsbO, CyanoQ (PsbQ), PsbU, PsbV and a large number of cofactors. It forms dimeric complexes.

The protein localises to the cellular thylakoid membrane. Functionally, a core subunit of photosystem II (PSII), probably helps stabilize the reaction center. The sequence is that of Photosystem II reaction center protein Psb30 from Nostoc sp. (strain PCC 7120 / SAG 25.82 / UTEX 2576).